The sequence spans 359 residues: Acyl-CoA desaturase (359 aa).

Residues 1–72 lie on the Cytoplasmic side of the membrane; sequence MPAHLLQEEI…EGPKPKLEYV (72 aa). Residues 73-93 traverse the membrane as a helical segment; sequence WRNIILMGLLHLGALYGITLI. Asn75 is a binding site for substrate. The Lumenal segment spans residues 94-97; it reads PTCK. The chain crosses the membrane as a helical span at residues 98–118; that stretch reads IYTFLWVLFYYVISALGITAG. At 119–217 the chain is on the cytoplasmic side; that stretch reads VHRLWSHRTY…EKLVMFQRRY (99 aa). His120 and His125 together coordinate Fe cation. The short motif at 120–125 is the Histidine box-1 element; the sequence is HRLWSH. Residues Asn148, Arg155, and Asp156 each coordinate substrate. Residues His157, His160, and His161 each contribute to the Fe cation site. The Histidine box-2 signature appears at 157–161; the sequence is HRAHH. The substrate site is built by Arg188 and Lys189. Ser203 bears the Phosphoserine mark. The chain crosses the membrane as a helical span at residues 218 to 237; sequence YKPGVLLLCFILPTLVPWYL. Topologically, residues 238 to 241 are lumenal; that stretch reads WGES. Residues 242 to 263 form a helical membrane-spanning segment; the sequence is FQNSLFFATFLRYAVVLNATWL. Trp262 serves as a coordination point for substrate. Residues 264-359 are Cytoplasmic-facing; the sequence is VNSAAHMYGY…RTGEESYKSG (96 aa). Fe cation is bound by residues His269, His298, His301, and His302. A Histidine box-3 motif is present at residues 298-302; sequence HNYHH.

This sequence belongs to the fatty acid desaturase type 1 family. The cofactor is Fe(2+).

The protein localises to the endoplasmic reticulum membrane. The catalysed reaction is octadecanoyl-CoA + 2 Fe(II)-[cytochrome b5] + O2 + 2 H(+) = (9Z)-octadecenoyl-CoA + 2 Fe(III)-[cytochrome b5] + 2 H2O. Functionally, stearoyl-CoA desaturase that utilizes O(2) and electrons from reduced cytochrome b5 to introduce the first double bond into saturated fatty acyl-CoA substrates. Catalyzes the insertion of a cis double bond at the delta-9 position into fatty acyl-CoA substrates including palmitoyl-CoA and stearoyl-CoA. Gives rise to a mixture of 16:1 and 18:1 unsaturated fatty acids. Plays an important role in lipid biosynthesis. Plays an important role in regulating the expression of genes that are involved in lipogenesis and in regulating mitochondrial fatty acid oxidation. Plays an important role in body energy homeostasis. Contributes to the biosynthesis of membrane phospholipids, cholesterol esters and triglycerides. This Ovis aries (Sheep) protein is Acyl-CoA desaturase (SCD).